The chain runs to 488 residues: Glutamyl-tRNA(Gln) amidotransferase subunit B, mitochondrial (488 aa).

Belongs to the GatB/GatE family. GatB subfamily. Subunit of the heterotrimeric GatFAB amidotransferase (AdT) complex, composed of A, B and F subunits.

It localises to the mitochondrion. It catalyses the reaction L-glutamyl-tRNA(Gln) + L-glutamine + ATP + H2O = L-glutaminyl-tRNA(Gln) + L-glutamate + ADP + phosphate + H(+). In terms of biological role, allows the formation of correctly charged Gln-tRNA(Gln) through the transamidation of misacylated Glu-tRNA(Gln) in the mitochondria. The reaction takes place in the presence of glutamine and ATP through an activated gamma-phospho-Glu-tRNA(Gln). This chain is Glutamyl-tRNA(Gln) amidotransferase subunit B, mitochondrial, found in Candida albicans (strain WO-1) (Yeast).